Reading from the N-terminus, the 167-residue chain is Ubiquitin-fold modifier-conjugating enzyme 1 (167 aa).

Residue Cys-116 is the Glycyl thioester intermediate of the active site. Residue Lys-122 forms a Glycyl lysine isopeptide (Lys-Gly) (interchain with G-Cter in UFM1) linkage.

Belongs to the ubiquitin-conjugating enzyme family. UFC1 subfamily. In terms of assembly, interacts with UBA5 (via C-terminus). Interacts with UFL1. Interacts with UFM1. Interacts with KIRREL3. Ufmylated at Lys-122. Deufmylated by UFSP1.

E2-like enzyme which specifically catalyzes the second step in ufmylation. Accepts the ubiquitin-like modifier UFM1 from the E1 enzyme UBA5 and forms an intermediate with UFM1 via a thioester linkage. Ufmylation is involved in various processes, such as ribosome recycling, response to DNA damage, interferon response or reticulophagy (also called ER-phagy). In Mus musculus (Mouse), this protein is Ubiquitin-fold modifier-conjugating enzyme 1.